The following is a 632-amino-acid chain: FAD-binding monooxygenase ausB (632 aa).

The interval 1-50 (MASAPEVESVKTPDPASTKTQHTSIAEIHTADQTWNNESNTRLPPNHRHH) is disordered. Composition is skewed to polar residues over residues 15–24 (PASTKTQHTS) and 31–43 (ADQT…NTRL). FAD-binding positions include 116 to 119 (TWYW), 128 to 129 (DI), and tyrosine 134. 126 to 128 (MCD) is an NADP(+) binding site. Residues 269–275 (TGSTAIQ) and 292–293 (RT) contribute to the NADP(+) site.

This sequence belongs to the FAD-binding monooxygenase family. FAD serves as cofactor.

The catalysed reaction is protoaustinoid A + AH2 + O2 = berkeleyone A + A + H2O. It participates in secondary metabolite biosynthesis; terpenoid biosynthesis. Its function is as follows. FAD-binding monooxygenase; part of the gene cluster that mediates the biosynthesis of calidodehydroaustin, a fungal meroterpenoid. The first step of the pathway is the synthesis of 3,5-dimethylorsellinic acid by the polyketide synthase ausA. 3,5-dimethylorsellinic acid is then prenylated by the polyprenyl transferase ausN. Further epoxidation by the FAD-dependent monooxygenase ausM and cyclization by the probable terpene cyclase ausL lead to the formation of protoaustinoid A. Protoaustinoid A is then oxidized to spiro-lactone preaustinoid A3 by the combined action of the FAD-binding monooxygenases ausB and ausC, and the dioxygenase ausE. Acid-catalyzed keto-rearrangement and ring contraction of the tetraketide portion of preaustinoid A3 by ausJ lead to the formation of preaustinoid A4. The aldo-keto reductase ausK, with the help of ausH, is involved in the next step by transforming preaustinoid A4 into isoaustinone which is in turn hydroxylated by the P450 monooxygenase ausI to form austinolide. The cytochrome P450 monooxygenase ausG modifies austinolide to austinol. Austinol is further acetylated to austin by the O-acetyltransferase ausP, which spontaneously changes to dehydroaustin. The cytochrome P450 monooxygenase ausR then converts dehydroaustin is into 7-dehydrodehydroaustin. The hydroxylation catalyzed by ausR permits the O-acetyltransferase ausQ to add an additional acetyl group to the molecule, leading to the formation of acetoxydehydroaustin. The short chain dehydrogenase ausT catalyzes the reduction of the double bond present between carbon atoms 1 and 2 to convert 7-dehydrodehydroaustin into 1,2-dihydro-7-hydroxydehydroaustin. AusQ catalyzes not only an acetylation reaction but also the addition of the PKS ausV diketide product to 1,2-dihydro-7-hydroxydehydroaustin, forming precalidodehydroaustin. Finally, the iron/alpha-ketoglutarate-dependent dioxygenase converts precalidodehydroaustin into calidodehydroaustin. The protein is FAD-binding monooxygenase ausB of Aspergillus calidoustus.